The sequence spans 113 residues: Retrotransposon Gag-like protein 8A (113 aa).

This sequence belongs to the FAM127 family.

In Homo sapiens (Human), this protein is Retrotransposon Gag-like protein 8A.